The following is a 381-amino-acid chain: Queuine tRNA-ribosyltransferase (381 aa).

The active-site Proton acceptor is the aspartate 92. Substrate-binding positions include 92–96 (DSGGF), aspartate 146, glutamine 190, and glycine 217. The interval 248 to 254 (GVGRPED) is RNA binding. The active-site Nucleophile is the aspartate 267. An RNA binding; important for wobble base 34 recognition region spans residues 272–276 (TRNAR). Zn(2+) contacts are provided by cysteine 305, cysteine 307, cysteine 310, and histidine 337.

It belongs to the queuine tRNA-ribosyltransferase family. As to quaternary structure, homodimer. Within each dimer, one monomer is responsible for RNA recognition and catalysis, while the other monomer binds to the replacement base PreQ1. The cofactor is Zn(2+).

It carries out the reaction 7-aminomethyl-7-carbaguanine + guanosine(34) in tRNA = 7-aminomethyl-7-carbaguanosine(34) in tRNA + guanine. It participates in tRNA modification; tRNA-queuosine biosynthesis. Its function is as follows. Catalyzes the base-exchange of a guanine (G) residue with the queuine precursor 7-aminomethyl-7-deazaguanine (PreQ1) at position 34 (anticodon wobble position) in tRNAs with GU(N) anticodons (tRNA-Asp, -Asn, -His and -Tyr). Catalysis occurs through a double-displacement mechanism. The nucleophile active site attacks the C1' of nucleotide 34 to detach the guanine base from the RNA, forming a covalent enzyme-RNA intermediate. The proton acceptor active site deprotonates the incoming PreQ1, allowing a nucleophilic attack on the C1' of the ribose to form the product. After dissociation, two additional enzymatic reactions on the tRNA convert PreQ1 to queuine (Q), resulting in the hypermodified nucleoside queuosine (7-(((4,5-cis-dihydroxy-2-cyclopenten-1-yl)amino)methyl)-7-deazaguanosine). The polypeptide is Queuine tRNA-ribosyltransferase (Xanthomonas oryzae pv. oryzae (strain MAFF 311018)).